Consider the following 339-residue polypeptide: Retroviral-like aspartic protease 1 (339 aa).

The propeptide occupies 1-188 (MRNPGGPGWA…SEPEEILFAN (188 aa)). Residues 34–53 (VPAPFNSSRQGKNTAQPTEP) are disordered. Positions 38–53 (FNSSRQGKNTAQPTEP) are enriched in polar residues. A glycan (N-linked (GlcNAc...) asparagine) is linked at asparagine 39. Residues 55 to 75 (LSSVIAPTLFCAFLYLACVTA) form a helical membrane-spanning segment. One can recognise a Peptidase A2 domain in the interval 205–286 (VRFLVDSGAQ…AEEAIIGTDV (82 aa)). Aspartate 210 is an active-site residue. An N-linked (GlcNAc...) asparagine glycan is attached at asparagine 274. Residues 325 to 339 (LIEEEEGSSAPEGSH) constitute a propeptide that is removed on maturation.

Homodimer. Post-translationally, undergoes autocleavage which is necessary for activation of the protein. In terms of tissue distribution, highly expressed in stratified epithelia in skin, tongue, esophagus, forestomach and vagina. Also expressed in trachea, urinary bladder and thymus. Undetectable in simple epithelia. Within the epidermis, expressed exclusively in the granular layer (at protein level). Levels are elevated in benign skin tumors but are down-regulated in squamous cell carcinomas.

The protein resides in the membrane. In terms of biological role, protease responsible for filaggrin processing, essential for the maintenance of a proper epidermis organization. In Mus musculus (Mouse), this protein is Retroviral-like aspartic protease 1.